The following is a 364-amino-acid chain: PDZ and LIM domain protein 3 (364 aa).

A PDZ domain is found at 1–84 (MPQTVILPGP…QLCLKIDRGE (84 aa)). A phosphoserine mark is found at Ser-18, Ser-93, and Ser-264. The region spanning 292–351 (PLCDKCGSGIVGAVVKARDKYRHPECFVCADCNLNLKQKGYFFIEGELYCETHARARTKP) is the LIM zinc-binding domain.

As to quaternary structure, interacts with ACTN2. Forms a heterodimer with PDLIM4 (via LIM domain). In terms of tissue distribution, isoform 1 is highly expressed in differentiated skeletal muscle. Isoform 2 is heart-specific.

It is found in the cytoplasm. The protein localises to the myofibril. Its subcellular location is the sarcomere. The protein resides in the z line. Its function is as follows. May play a role in the organization of actin filament arrays within muscle cells. The sequence is that of PDZ and LIM domain protein 3 (PDLIM3) from Homo sapiens (Human).